We begin with the raw amino-acid sequence, 425 residues long: MPSYGNLGRLGGRHEYGVLVAMTSSAELDRVRWAHQLRSYRIASVLRIGVVGLMVAAMVVGTSRSEWPQQIVLIGVYAVAALWALLLAYSASRRFFALRRFRSMGRLEPFAFTAVDVLILTGFQLLSTDGIYPLLIMILLPVLVGLDVSTRRAAVVLACTLVGFAVAVLGDPVMLRAIGWPETIFRFALYAFLCATALMVVRIEERHTRSVAGLSALRAELLAQTMTASEVLQRRIAEAIHDGPLQDVLAARQELIELDAVTPGDERVGRALAGLQSASERLRQATFELHPAVLEQVGLGPAVKQLAASTAQRSGIKISTDIDYPIRSGIDPIVFGVVRELLSNVVRHSGATTASVRLGITDEKCVLDVADDGVGVTGDTMARRLGEGHIGLASHRARVDAAGGVLVFLATPRGTHVCVELPLKR.

The next 6 helical transmembrane spans lie at 42 to 62 (IASV…VVGT), 71 to 91 (IVLI…AYSA), 107 to 127 (LEPF…QLLS), 130 to 150 (GIYP…DVST), 155 to 175 (VVLA…PVML), and 181 to 201 (PETI…LMVV). One can recognise a Histidine kinase domain in the interval 224 to 425 (QTMTASEVLQ…HVCVELPLKR (202 aa)). Histidine 241 carries the phosphohistidine; by autocatalysis modification.

In terms of processing, autophosphorylated on His-241.

It localises to the cell membrane. It carries out the reaction ATP + protein L-histidine = ADP + protein N-phospho-L-histidine.. Its function is as follows. Member of the two-component regulatory system NarS/NarL involved in gene expression during aerobic nitrate metabolism. Plays therefore a crucial role in anaerobic survival of mycobacteria in host. Functions as a sensor protein kinase which is autophosphorylated at a histidine residue and transfers its phosphate group to the conserved aspartic acid residue in the regulatory domain of NarL. In turn, NarL binds to the upstream promoter regions of target genes to regulate their expression during aerobic nitrate metabolism. The polypeptide is Sensor histidine kinase NarS (Mycobacterium tuberculosis (strain ATCC 25618 / H37Rv)).